A 506-amino-acid chain; its full sequence is Ribose import ATP-binding protein RbsA (506 aa).

ABC transporter domains are found at residues 5–241 (LALT…VGRR) and 254–498 (RDAA…TSDV). 37-44 (GENGAGKS) lines the ATP pocket.

Belongs to the ABC transporter superfamily. Ribose importer (TC 3.A.1.2.1) family. The complex is composed of an ATP-binding protein (RbsA), two transmembrane proteins (RbsC) and a solute-binding protein (RbsB).

Its subcellular location is the cell inner membrane. It catalyses the reaction D-ribose(out) + ATP + H2O = D-ribose(in) + ADP + phosphate + H(+). Functionally, part of the ABC transporter complex RbsABC involved in ribose import. Responsible for energy coupling to the transport system. The chain is Ribose import ATP-binding protein RbsA from Burkholderia mallei (strain ATCC 23344).